A 447-amino-acid chain; its full sequence is N-succinylarginine dihydrolase (447 aa).

Residues 19-28 (AGLSFGNEAS), asparagine 110, and 137-138 (HR) each bind substrate. Residue glutamate 174 is part of the active site. Residue arginine 212 participates in substrate binding. Residue histidine 248 is part of the active site. Residues aspartate 250 and asparagine 359 each contribute to the substrate site. Cysteine 365 (nucleophile) is an active-site residue.

This sequence belongs to the succinylarginine dihydrolase family. Homodimer.

The enzyme catalyses N(2)-succinyl-L-arginine + 2 H2O + 2 H(+) = N(2)-succinyl-L-ornithine + 2 NH4(+) + CO2. It functions in the pathway amino-acid degradation; L-arginine degradation via AST pathway; L-glutamate and succinate from L-arginine: step 2/5. Its function is as follows. Catalyzes the hydrolysis of N(2)-succinylarginine into N(2)-succinylornithine, ammonia and CO(2). The sequence is that of N-succinylarginine dihydrolase from Salmonella enteritidis PT4 (strain P125109).